Reading from the N-terminus, the 353-residue chain is Anthranilate phosphoribosyltransferase (353 aa).

Residues G87, 90 to 91, T95, 97 to 100, 115 to 123, and T127 each bind 5-phospho-alpha-D-ribose 1-diphosphate; these read GD, NIST, and KHGNRAASS. G87 provides a ligand contact to anthranilate. S99 is a binding site for Mg(2+). N118 serves as a coordination point for anthranilate. R173 serves as a coordination point for anthranilate. Mg(2+) is bound by residues D231 and E232.

The protein belongs to the anthranilate phosphoribosyltransferase family. Homodimer. Requires Mg(2+) as cofactor.

It carries out the reaction N-(5-phospho-beta-D-ribosyl)anthranilate + diphosphate = 5-phospho-alpha-D-ribose 1-diphosphate + anthranilate. Its pathway is amino-acid biosynthesis; L-tryptophan biosynthesis; L-tryptophan from chorismate: step 2/5. In terms of biological role, catalyzes the transfer of the phosphoribosyl group of 5-phosphorylribose-1-pyrophosphate (PRPP) to anthranilate to yield N-(5'-phosphoribosyl)-anthranilate (PRA). This chain is Anthranilate phosphoribosyltransferase, found in Salinispora arenicola (strain CNS-205).